The chain runs to 212 residues: Golgi-associated RAB2 interactor protein 5A (212 aa).

Disordered regions lie at residues 1–21 (MKGG…LAPA) and 162–212 (PFTH…LWGL). Residues 169-185 (APEEEEEEEEEEEEEEV) show a composition bias toward acidic residues.

Belongs to the GARIN family. In terms of assembly, interacts (via N-terminus) with RAB2B (in GTP-bound form). As to expression, expressed in testis (at protein level).

The protein localises to the golgi apparatus. Functionally, RAB2B effector protein which promotes cytosolic DNA-induced innate immune responses. Regulates IFN responses against DNA viruses by regulating the CGAS-STING signaling axis. The protein is Golgi-associated RAB2 interactor protein 5A of Mus musculus (Mouse).